Here is a 556-residue protein sequence, read N- to C-terminus: GDP-Man:Man(3)GlcNAc(2)-PP-Dol alpha-1,2-mannosyltransferase (556 aa).

Residues 1–7 (MANGLFT) are Lumenal-facing. A helical transmembrane segment spans residues 8 to 28 (YVAISLFTIGPLLALFIPFVW). At 29–184 (RLVGSSLGWY…RWVLASTWPY (156 aa)) the chain is on the cytoplasmic side. The segment covering 64 to 79 (SKSAKGRKAEKEDRDT) has biased composition (basic and acidic residues). Residues 64-86 (SKSAKGRKAEKEDRDTFNNTEAT) are disordered. The helical intramembrane region spans 185–205 (FTLAGQSFGSLIMAWDAFSLL). Residues 206-454 (VPDIFVDTMG…VGVNGMWNEH (249 aa)) are Cytoplasmic-facing. The helical intramembrane region spans 455-475 (FGIGVVEYQAAGLISVVHDSG). Over 476–556 (GPKLDIVVEV…KAVEKPKSRQ (81 aa)) the chain is Cytoplasmic.

This sequence belongs to the glycosyltransferase group 1 family. Glycosyltransferase 4 subfamily.

The protein localises to the endoplasmic reticulum membrane. It carries out the reaction an alpha-D-Man-(1-&gt;3)-[alpha-D-Man-(1-&gt;6)]-beta-D-Man-(1-&gt;4)-beta-D-GlcNAc-(1-&gt;4)-alpha-D-GlcNAc-diphospho-di-trans,poly-cis-dolichol + 2 GDP-alpha-D-mannose = an alpha-D-Man-(1-&gt;2)-alpha-D-Man-(1-&gt;2)-alpha-D-Man-(1-&gt;3)-[alpha-D-Man-(1-&gt;6)]-beta-D-Man-(1-&gt;4)-beta-D-GlcNAc-(1-&gt;4)-alpha-D-GlcNAc-diphospho-di-trans,poly-cis-dolichol + 2 GDP + 2 H(+). It participates in protein modification; protein glycosylation. In terms of biological role, GDP-Man:Man(3)GlcNAc(2)-PP-Dol alpha-1,2-mannosyltransferase that operates in the biosynthetic pathway of dolichol-linked oligosaccharides, the glycan precursors employed in protein asparagine (N)-glycosylation. The assembly of dolichol-linked oligosaccharides begins on the cytosolic side of the endoplasmic reticulum membrane and finishes in its lumen. The sequential addition of sugars to dolichol pyrophosphate produces dolichol-linked oligosaccharides containing fourteen sugars, including two GlcNAcs, nine mannoses and three glucoses. Once assembled, the oligosaccharide is transferred from the lipid to nascent proteins by oligosaccharyltransferases. Catalyzes, on the cytoplasmic face of the endoplasmic reticulum, the addition of the fourth and fifth mannose residues to the dolichol-linked oligosaccharide chain, to produce Man(5)GlcNAc(2)-PP-dolichol core oligosaccharide. The chain is GDP-Man:Man(3)GlcNAc(2)-PP-Dol alpha-1,2-mannosyltransferase (alg-11) from Neurospora crassa (strain ATCC 24698 / 74-OR23-1A / CBS 708.71 / DSM 1257 / FGSC 987).